The following is a 236-amino-acid chain: Protein-S-isoprenylcysteine O-methyltransferase (236 aa).

4 helical membrane-spanning segments follow: residues Asn-3 to Val-23, Phe-24 to Phe-44, Ala-76 to Phe-96, and Phe-108 to Gly-128. S-adenosyl-L-methionine-binding positions include His-155 to Val-158, Tyr-163, and His-168 to Tyr-171. The helical transmembrane segment at Phe-174–Phe-194 threads the bilayer. Residue Arg-205 coordinates substrate. Glu-209 is an S-adenosyl-L-methionine binding site.

Belongs to the class VI-like SAM-binding methyltransferase superfamily. Isoprenylcysteine carboxyl methyltransferase family.

The protein resides in the membrane. The enzyme catalyses [protein]-C-terminal S-[(2E,6E)-farnesyl]-L-cysteine + S-adenosyl-L-methionine = [protein]-C-terminal S-[(2E,6E)-farnesyl]-L-cysteine methyl ester + S-adenosyl-L-homocysteine. In terms of biological role, mediates C-terminal methylation of the isoprenylated C-terminal cysteine in M-factor. In Schizosaccharomyces pombe (strain 972 / ATCC 24843) (Fission yeast), this protein is Protein-S-isoprenylcysteine O-methyltransferase (mam4).